The sequence spans 292 residues: Large ribosomal subunit protein bL19m (292 aa).

A disordered region spans residues 40-61 (PVRQQSTGPSEPGAFQPPPKPV). Serine 77 carries the phosphoserine modification.

Belongs to the bacterial ribosomal protein bL19 family. As to quaternary structure, component of the mitochondrial ribosome large subunit (39S) which comprises a 16S rRNA and about 50 distinct proteins.

The protein resides in the mitochondrion. The polypeptide is Large ribosomal subunit protein bL19m (MRPL19) (Pongo abelii (Sumatran orangutan)).